Reading from the N-terminus, the 427-residue chain is SAC3 domain-containing protein 1 (427 aa).

Composition is skewed to basic and acidic residues over residues 1–10 (MGRFKGENRS) and 117–127 (ADPKRTVKEYS). Disordered stretches follow at residues 1-53 (MGRF…QDAV) and 101-143 (LHRL…LLRP). Pro residues predominate over residues 134–143 (PRPPPSLLRP). Residues 229–397 (QVQEGFGSLR…EGLPPPGAYH (169 aa)) enclose the PCI domain. Position 425 is a phosphoserine (Ser-425).

Belongs to the SAC3 family. In terms of assembly, may be part of a SEM1-containing complex. Present in spleen cells (at protein level).

The protein resides in the cytoplasm. Its subcellular location is the cytoskeleton. It localises to the microtubule organizing center. It is found in the centrosome. The protein localises to the spindle. Functionally, involved in centrosome duplication and mitotic progression. This Mus musculus (Mouse) protein is SAC3 domain-containing protein 1 (Sac3d1).